Here is a 150-residue protein sequence, read N- to C-terminus: Large ribosomal subunit protein bL9 (150 aa).

It belongs to the bacterial ribosomal protein bL9 family.

In terms of biological role, binds to the 23S rRNA. The protein is Large ribosomal subunit protein bL9 of Idiomarina loihiensis (strain ATCC BAA-735 / DSM 15497 / L2-TR).